Reading from the N-terminus, the 992-residue chain is ATP-dependent DNA helicase PIF7 (992 aa).

Residues 1–21 constitute a mitochondrion transit peptide; it reads MWDGPLRSRQNLRTVAKLRSS. Disordered regions lie at residues 20–43, 145–182, and 190–209; these read SSGC…GETA, TVNK…TAAS, and LDSS…AVTQ. Polar residues-rich tracts occupy residues 23 to 43, 173 to 182, and 191 to 208; these read CPLT…GETA, NVDNTTTAAS, and DSSS…QAVT. Residue 237-244 coordinates ATP; it reads GGAGTGKS. A DNA-binding region spans residues 651 to 670; that stretch reads QAYVALSRCTDVANLVIENF.

Belongs to the helicase family. PIF1 subfamily. In terms of assembly, monomer. It depends on Mg(2+) as a cofactor.

It is found in the mitochondrion matrix. The protein localises to the kinetoplast. It catalyses the reaction Couples ATP hydrolysis with the unwinding of duplex DNA at the replication fork by translocating in the 5'-3' direction. This creates two antiparallel DNA single strands (ssDNA). The leading ssDNA polymer is the template for DNA polymerase III holoenzyme which synthesizes a continuous strand.. It carries out the reaction ATP + H2O = ADP + phosphate + H(+). In terms of biological role, DNA-dependent ATPase and 5'-3' DNA helicase required for the maintenance of mitochondrial (kinetoplast) genome stability. The chain is ATP-dependent DNA helicase PIF7 from Trypanosoma brucei brucei (strain 927/4 GUTat10.1).